The following is a 462-amino-acid chain: Siroheme synthase (462 aa).

The segment at 1–203 is precorrin-2 dehydrogenase /sirohydrochlorin ferrochelatase; sequence MEYLPLFANL…GKWEHAEKEI (203 aa). NAD(+)-binding positions include 22–23 and 43–44; these read NV and DD. Serine 128 bears the Phosphoserine mark. A uroporphyrinogen-III C-methyltransferase region spans residues 215-462; it reads GNVALVGAGP…NWFGKIIKEQ (248 aa). Proline 224 lines the S-adenosyl-L-methionine pocket. The Proton acceptor role is filled by aspartate 247. Lysine 269 serves as the catalytic Proton donor. S-adenosyl-L-methionine is bound by residues 300 to 302, isoleucine 305, 330 to 331, methionine 383, and glycine 412; these read GGD and TA.

This sequence in the N-terminal section; belongs to the precorrin-2 dehydrogenase / sirohydrochlorin ferrochelatase family. The protein in the C-terminal section; belongs to the precorrin methyltransferase family.

It catalyses the reaction uroporphyrinogen III + 2 S-adenosyl-L-methionine = precorrin-2 + 2 S-adenosyl-L-homocysteine + H(+). The catalysed reaction is precorrin-2 + NAD(+) = sirohydrochlorin + NADH + 2 H(+). It carries out the reaction siroheme + 2 H(+) = sirohydrochlorin + Fe(2+). It functions in the pathway cofactor biosynthesis; adenosylcobalamin biosynthesis; precorrin-2 from uroporphyrinogen III: step 1/1. Its pathway is cofactor biosynthesis; adenosylcobalamin biosynthesis; sirohydrochlorin from precorrin-2: step 1/1. The protein operates within porphyrin-containing compound metabolism; siroheme biosynthesis; precorrin-2 from uroporphyrinogen III: step 1/1. It participates in porphyrin-containing compound metabolism; siroheme biosynthesis; siroheme from sirohydrochlorin: step 1/1. It functions in the pathway porphyrin-containing compound metabolism; siroheme biosynthesis; sirohydrochlorin from precorrin-2: step 1/1. In terms of biological role, multifunctional enzyme that catalyzes the SAM-dependent methylations of uroporphyrinogen III at position C-2 and C-7 to form precorrin-2 via precorrin-1. Then it catalyzes the NAD-dependent ring dehydrogenation of precorrin-2 to yield sirohydrochlorin. Finally, it catalyzes the ferrochelation of sirohydrochlorin to yield siroheme. The polypeptide is Siroheme synthase (Baumannia cicadellinicola subsp. Homalodisca coagulata).